The chain runs to 581 residues: Probable bifunctional SAT/APS kinase 2 (581 aa).

Residues 1–200 (MSGFVVWFTG…AAGGARGLIA (200 aa)) form an adenylsulfate kinase region. 10–17 (GLSGAGKS) lines the ATP pocket. Residue serine 84 is the Phosphoserine intermediate of the active site. A sulfate adenylyltransferase region spans residues 201–581 (PHGGELVNRW…ILIESMRSSS (381 aa)).

The protein in the N-terminal section; belongs to the APS kinase family. In the C-terminal section; belongs to the sulfate adenylyltransferase family.

The catalysed reaction is sulfate + ATP + H(+) = adenosine 5'-phosphosulfate + diphosphate. It catalyses the reaction adenosine 5'-phosphosulfate + ATP = 3'-phosphoadenylyl sulfate + ADP + H(+). Its pathway is sulfur metabolism; hydrogen sulfide biosynthesis; sulfite from sulfate: step 1/3. It participates in sulfur metabolism; hydrogen sulfide biosynthesis; sulfite from sulfate: step 2/3. The chain is Probable bifunctional SAT/APS kinase 2 (sat2/cysC2) from Sorangium cellulosum (strain So ce56) (Polyangium cellulosum (strain So ce56)).